Consider the following 424-residue polypeptide: 2,3-bisphosphoglycerate-independent phosphoglycerate mutase (424 aa).

The protein belongs to the BPG-independent phosphoglycerate mutase family. A-PGAM subfamily.

It carries out the reaction (2R)-2-phosphoglycerate = (2R)-3-phosphoglycerate. Its pathway is carbohydrate degradation; glycolysis; pyruvate from D-glyceraldehyde 3-phosphate: step 3/5. Its function is as follows. Catalyzes the interconversion of 2-phosphoglycerate and 3-phosphoglycerate. In Aeropyrum pernix (strain ATCC 700893 / DSM 11879 / JCM 9820 / NBRC 100138 / K1), this protein is 2,3-bisphosphoglycerate-independent phosphoglycerate mutase.